The primary structure comprises 344 residues: Anthranilate phosphoribosyltransferase (344 aa).

5-phospho-alpha-D-ribose 1-diphosphate contacts are provided by residues Gly80, 83-84 (GD), Thr88, 90-93 (NVST), 108-116 (KHGNRSVSS), and Ser120. Gly80 is a binding site for anthranilate. A Mg(2+)-binding site is contributed by Ser92. Residue Asn111 participates in anthranilate binding. Residue Arg166 coordinates anthranilate. The Mg(2+) site is built by Asp225 and Glu226.

The protein belongs to the anthranilate phosphoribosyltransferase family. As to quaternary structure, homodimer. It depends on Mg(2+) as a cofactor.

The enzyme catalyses N-(5-phospho-beta-D-ribosyl)anthranilate + diphosphate = 5-phospho-alpha-D-ribose 1-diphosphate + anthranilate. Its pathway is amino-acid biosynthesis; L-tryptophan biosynthesis; L-tryptophan from chorismate: step 2/5. Catalyzes the transfer of the phosphoribosyl group of 5-phosphorylribose-1-pyrophosphate (PRPP) to anthranilate to yield N-(5'-phosphoribosyl)-anthranilate (PRA). This Legionella pneumophila (strain Corby) protein is Anthranilate phosphoribosyltransferase.